We begin with the raw amino-acid sequence, 434 residues long: Homogentisate 1,2-dioxygenase (434 aa).

Residue His-289 is the Proton acceptor of the active site. Residues His-332 and Glu-338 each coordinate Fe cation. 2 residues coordinate homogentisate: Tyr-347 and His-368. A Fe cation-binding site is contributed by His-368.

This sequence belongs to the homogentisate dioxygenase family. Hexamer; dimer of trimers. It depends on Fe cation as a cofactor.

The enzyme catalyses homogentisate + O2 = 4-maleylacetoacetate + H(+). It functions in the pathway amino-acid degradation; L-phenylalanine degradation; acetoacetate and fumarate from L-phenylalanine: step 4/6. Functionally, involved in the catabolism of homogentisate (2,5-dihydroxyphenylacetate or 2,5-OH-PhAc), a central intermediate in the degradation of phenylalanine and tyrosine. Catalyzes the oxidative ring cleavage of the aromatic ring of homogentisate to yield maleylacetoacetate. In Pseudomonas syringae pv. tomato (strain ATCC BAA-871 / DC3000), this protein is Homogentisate 1,2-dioxygenase.